The sequence spans 159 residues: Small ribosomal subunit protein uS4 (159 aa).

Residues 106-158 form the S4 RNA-binding domain; sequence RRLQTIVYRMGLAKSIHHARQLIVHGHVAVAGRRVTSPGFLVPRELEDKISLI.

This sequence belongs to the universal ribosomal protein uS4 family. In terms of assembly, part of the 30S ribosomal subunit. Contacts protein S5. The interaction surface between S4 and S5 is involved in control of translational fidelity.

Functionally, one of the primary rRNA binding proteins, it binds directly to 16S rRNA where it nucleates assembly of the body of the 30S subunit. Its function is as follows. With S5 and S12 plays an important role in translational accuracy. This chain is Small ribosomal subunit protein uS4, found in Pyrobaculum aerophilum (strain ATCC 51768 / DSM 7523 / JCM 9630 / CIP 104966 / NBRC 100827 / IM2).